Here is a 125-residue protein sequence, read N- to C-terminus: UPF0102 protein PBPRA3228 (125 aa).

This sequence belongs to the UPF0102 family.

The sequence is that of UPF0102 protein PBPRA3228 from Photobacterium profundum (strain SS9).